The primary structure comprises 392 residues: Formate-dependent phosphoribosylglycinamide formyltransferase (392 aa).

Residues 20 to 21 (EL) and E80 contribute to the N(1)-(5-phospho-beta-D-ribosyl)glycinamide site. Residues R112, K153, 158–163 (SSGKGQ), 193–196 (EGFV), and E201 contribute to the ATP site. Residues 117–306 (RLAAEELGLP…EFALHVRAIL (190 aa)) enclose the ATP-grasp domain. Residues E265 and E277 each coordinate Mg(2+). N(1)-(5-phospho-beta-D-ribosyl)glycinamide-binding positions include D284, K355, and 362 to 363 (RR).

This sequence belongs to the PurK/PurT family. Homodimer.

The enzyme catalyses N(1)-(5-phospho-beta-D-ribosyl)glycinamide + formate + ATP = N(2)-formyl-N(1)-(5-phospho-beta-D-ribosyl)glycinamide + ADP + phosphate + H(+). Its pathway is purine metabolism; IMP biosynthesis via de novo pathway; N(2)-formyl-N(1)-(5-phospho-D-ribosyl)glycinamide from N(1)-(5-phospho-D-ribosyl)glycinamide (formate route): step 1/1. Functionally, involved in the de novo purine biosynthesis. Catalyzes the transfer of formate to 5-phospho-ribosyl-glycinamide (GAR), producing 5-phospho-ribosyl-N-formylglycinamide (FGAR). Formate is provided by PurU via hydrolysis of 10-formyl-tetrahydrofolate. In Aeromonas salmonicida (strain A449), this protein is Formate-dependent phosphoribosylglycinamide formyltransferase.